Reading from the N-terminus, the 221-residue chain is Protein LURP-one-related 17 (221 aa).

A disordered region spans residues 1–20 (MFPFLKQRSRSVHGEDAPSS).

It belongs to the LOR family.

Its function is as follows. Might be related to the phospholipid scramblase and tubby-like superfamily of membrane tethered transcription factors. The sequence is that of Protein LURP-one-related 17 from Arabidopsis thaliana (Mouse-ear cress).